The following is a 1184-amino-acid chain: DNA-directed RNA polymerase subunit beta (1184 aa).

Residues 1160–1184 form a disordered region; sequence DDDFTNQNDAFNIVQPENAAAEKTE.

Belongs to the RNA polymerase beta chain family. The RNAP catalytic core consists of 2 alpha, 1 beta, 1 beta' and 1 omega subunit. When a sigma factor is associated with the core the holoenzyme is formed, which can initiate transcription.

It catalyses the reaction RNA(n) + a ribonucleoside 5'-triphosphate = RNA(n+1) + diphosphate. Functionally, DNA-dependent RNA polymerase catalyzes the transcription of DNA into RNA using the four ribonucleoside triphosphates as substrates. This is DNA-directed RNA polymerase subunit beta from Listeria welshimeri serovar 6b (strain ATCC 35897 / DSM 20650 / CCUG 15529 / CIP 8149 / NCTC 11857 / SLCC 5334 / V8).